The following is a 489-amino-acid chain: Cytochrome P450 monooxygenase ataF (489 aa).

The helical transmembrane segment at 12 to 32 (WLEHSAVIATLFAFGTALFLV) threads the bilayer. Asn-289 carries an N-linked (GlcNAc...) asparagine glycan. Heme is bound at residue Cys-434.

It belongs to the cytochrome P450 family. Requires heme as cofactor.

It is found in the membrane. The protein operates within mycotoxin biosynthesis. In terms of biological role, cytochrome P450 monooxygenase; part of the gene cluster that mediates the biosynthesis of acetylaranotin, a member of the epipolythiodioxopiperazine (ETP) class of toxins characterized by a disulfide-bridged cyclic dipeptide. The first step of acetylaranotin biosynthesis is performed by the NRPS ataP which produces diketopiperazine cyclo-L-Phe-L-Phe via the condensation of 2 phenylalanines (L-Phe). The ataC domain of ataTC then catalyzes the formation of bishydroxylation of cyclo-L-Phe-L-Phe. The glutathione S-transferase domain ataG in ataIMG further catalyzes the conjugation of two glutathiones to the bishydroxylated intermediate. Next, the dipeptidase ataJ removes the Glu residues. The following step is performed by the carbon sulfur lyase domain ataI of ataIMG which may convert the bis-cysteinyl adduct to yield an epidithiol intermediate. The ataT domain from ataTC then catalyzes the oxidation of the free dithiols, followed by a cyclization step catalyzed by the cytochrome P450 ataF. AtaF probably acts as an epoxidase to promote a dual epoxidation formation at C8 and C9 along with C8' and C9', followed by the spontaneous nucleophilic attack of the amide nitrogens N10 and N10' to yield an intermediate with the pyrrolidine partial structure. The final steps of acetylaranotin biosynthesis involve the acetylation and ring rearrangement of an epitetrathiodiketopiperazine intermediate to produce acetylaranotin. AtaH probably catalyzes the acetylation of epitetrathiodiketopiperazine to produce a diacetate and ataY is responsible for the formation of the dihydrooxepin moiety that converts the diacetate intermediate to acetylaranotin via acetylapoaranotin. Both enzymes could function independently in the absence of the other. The acetylaranotin bis-thiomethyltransferase ataS located outside of acetylaranotin gene cluster is the main thiomethyltransferase responsible for converting acetylaranotin and its related intermediates to their methylated forms. The chain is Cytochrome P450 monooxygenase ataF from Aspergillus terreus (strain NIH 2624 / FGSC A1156).